Here is a 211-residue protein sequence, read N- to C-terminus: Protein-L-isoaspartate O-methyltransferase (211 aa).

Residue S60 is part of the active site.

Belongs to the methyltransferase superfamily. L-isoaspartyl/D-aspartyl protein methyltransferase family.

It localises to the cytoplasm. The enzyme catalyses [protein]-L-isoaspartate + S-adenosyl-L-methionine = [protein]-L-isoaspartate alpha-methyl ester + S-adenosyl-L-homocysteine. Its function is as follows. Catalyzes the methyl esterification of L-isoaspartyl residues in peptides and proteins that result from spontaneous decomposition of normal L-aspartyl and L-asparaginyl residues. It plays a role in the repair and/or degradation of damaged proteins. This Pseudomonas savastanoi pv. phaseolicola (strain 1448A / Race 6) (Pseudomonas syringae pv. phaseolicola (strain 1448A / Race 6)) protein is Protein-L-isoaspartate O-methyltransferase.